A 118-amino-acid chain; its full sequence is Large ribosomal subunit protein bL20 (118 aa).

Belongs to the bacterial ribosomal protein bL20 family.

Functionally, binds directly to 23S ribosomal RNA and is necessary for the in vitro assembly process of the 50S ribosomal subunit. It is not involved in the protein synthesizing functions of that subunit. In Proteus mirabilis (strain HI4320), this protein is Large ribosomal subunit protein bL20.